The following is a 276-amino-acid chain: S-adenosylmethionine decarboxylase proenzyme (276 aa).

Catalysis depends on Ser124, which acts as the Schiff-base intermediate with substrate; via pyruvic acid. Pyruvic acid (Ser); by autocatalysis is present on Ser124. His129 acts as the Proton acceptor; for processing activity in catalysis. The active-site Proton donor; for catalytic activity is the Cys152.

The protein belongs to the prokaryotic AdoMetDC family. Type 2 subfamily. As to quaternary structure, heterooctamer of four alpha and four beta chains arranged as a tetramer of alpha/beta heterodimers. Requires pyruvate as cofactor. Is synthesized initially as an inactive proenzyme. Formation of the active enzyme involves a self-maturation process in which the active site pyruvoyl group is generated from an internal serine residue via an autocatalytic post-translational modification. Two non-identical subunits are generated from the proenzyme in this reaction, and the pyruvate is formed at the N-terminus of the alpha chain, which is derived from the carboxyl end of the proenzyme. The post-translation cleavage follows an unusual pathway, termed non-hydrolytic serinolysis, in which the side chain hydroxyl group of the serine supplies its oxygen atom to form the C-terminus of the beta chain, while the remainder of the serine residue undergoes an oxidative deamination to produce ammonia and the pyruvoyl group blocking the N-terminus of the alpha chain.

It carries out the reaction S-adenosyl-L-methionine + H(+) = S-adenosyl 3-(methylsulfanyl)propylamine + CO2. It functions in the pathway amine and polyamine biosynthesis; S-adenosylmethioninamine biosynthesis; S-adenosylmethioninamine from S-adenosyl-L-methionine: step 1/1. Functionally, catalyzes the decarboxylation of S-adenosylmethionine to S-adenosylmethioninamine (dcAdoMet), the propylamine donor required for the synthesis of the polyamines spermine and spermidine from the diamine putrescine. This is S-adenosylmethionine decarboxylase proenzyme from Desulfitobacterium hafniense (strain Y51).